Here is a 966-residue protein sequence, read N- to C-terminus: Catenin alpha-2 (966 aa).

Residues 924–940 (PEKKPLVKREKPEEYQT) are compositionally biased toward basic and acidic residues. Positions 924-952 (PEKKPLVKREKPEEYQTRVRRGSQKKHIS) are disordered. Over residues 941–951 (RVRRGSQKKHI) the composition is skewed to basic residues.

It belongs to the vinculin/alpha-catenin family.

It localises to the cell membrane. It is found in the cytoplasm. The protein resides in the cytoskeleton. Its subcellular location is the cell junction. The protein localises to the adherens junction. It localises to the cell projection. It is found in the axon. The protein resides in the nucleus. Its function is as follows. May function as a linker between cadherin adhesion receptors and the cytoskeleton to regulate cell-cell adhesion and differentiation in the nervous system. The chain is Catenin alpha-2 (ctnna2) from Xenopus tropicalis (Western clawed frog).